A 494-amino-acid polypeptide reads, in one-letter code: NADH-quinone oxidoreductase subunit N 2 (494 aa).

A run of 14 helical transmembrane segments spans residues 14-34 (LPQIALTVAAFFVLACDGMLL), 45-65 (IAMLLSVAGSLVALALLPLTA), 82-102 (VVQVVLLLFTLAVTLLSGSVL), 116-136 (IGEFFALLLFATVAALFLVST), 139-159 (LLLIFLAVEFLSLVLYILTAF), 174-194 (FLFGGMSAGFLLFGISLLYGV), 214-234 (LLVAIVLVILGFGFKIAAAPF), 262-282 (FFVFAQVLFIGVASASGNAAW), 289-309 (WMPILAAVAVLSMLLGNLAAL), 317-337 (LLAYSAIGHAGYLLLGLIAHT), 344-364 (LLYYVFTYALAVLGAFGVLAI), 388-408 (ACLLVFLLSLAGIPPLVGFFA), 422-442 (AFGLLWLVILAILMSVVALFY), and 470-490 (ITLLVMAALTLLLGCAPNLLM).

This sequence belongs to the complex I subunit 2 family. NDH-1 is composed of 14 different subunits. Subunits NuoA, H, J, K, L, M, N constitute the membrane sector of the complex.

It is found in the cell inner membrane. The catalysed reaction is a quinone + NADH + 5 H(+)(in) = a quinol + NAD(+) + 4 H(+)(out). In terms of biological role, NDH-1 shuttles electrons from NADH, via FMN and iron-sulfur (Fe-S) centers, to quinones in the respiratory chain. The immediate electron acceptor for the enzyme in this species is believed to be ubiquinone. Couples the redox reaction to proton translocation (for every two electrons transferred, four hydrogen ions are translocated across the cytoplasmic membrane), and thus conserves the redox energy in a proton gradient. The sequence is that of NADH-quinone oxidoreductase subunit N 2 from Acidobacterium capsulatum (strain ATCC 51196 / DSM 11244 / BCRC 80197 / JCM 7670 / NBRC 15755 / NCIMB 13165 / 161).